Here is a 364-residue protein sequence, read N- to C-terminus: Tyrosine-protein phosphatase YVH1 (364 aa).

The Tyrosine-protein phosphatase domain maps to 11-173 (EVTRILGGIY…LHLFEKMGGD (163 aa)). Cys117 (phosphocysteine intermediate) is an active-site residue. The residue at position 196 (Ser196) is a Phosphoserine.

Belongs to the protein-tyrosine phosphatase family. Non-receptor class dual specificity subfamily.

It carries out the reaction O-phospho-L-tyrosyl-[protein] + H2O = L-tyrosyl-[protein] + phosphate. In terms of biological role, may be directly involved in signal transduction and/or cell cycle regulation. It is necessary for maintaining growth rate or spore germination. Could show both activity toward tyrosine-protein phosphate as well as with serine-protein phosphate. This is Tyrosine-protein phosphatase YVH1 (YVH1) from Saccharomyces cerevisiae (strain ATCC 204508 / S288c) (Baker's yeast).